Here is a 438-residue protein sequence, read N- to C-terminus: Enolase (438 aa).

Substrate-binding residues include His159 and Glu168. Residue Glu211 is the Proton donor of the active site. Mg(2+) contacts are provided by Asp246, Glu297, and Asp322. The substrate site is built by Glu297 and Asp322. Lys347 (proton acceptor) is an active-site residue. Substrate is bound by residues 374 to 377 and Lys398; that span reads SHRS.

The protein belongs to the enolase family. As to quaternary structure, homodimer. Requires Mg(2+) as cofactor.

Its subcellular location is the cytoplasm. The enzyme catalyses (2R)-2-phosphoglycerate = phosphoenolpyruvate + H2O. It functions in the pathway carbohydrate degradation; glycolysis; pyruvate from D-glyceraldehyde 3-phosphate: step 4/5. The sequence is that of Enolase (enoA) from Penicillium citrinum.